We begin with the raw amino-acid sequence, 149 residues long: Transcriptional repressor NrdR (149 aa).

The segment at 3–34 (CPFCSHQETQVVETRVSEDGDFIRRRRQCGAC) is a zinc-finger region. Positions 49–139 (PTVVKKDGRR…VYRSFEDIDE (91 aa)) constitute an ATP-cone domain.

This sequence belongs to the NrdR family. Zn(2+) is required as a cofactor.

Its function is as follows. Negatively regulates transcription of bacterial ribonucleotide reductase nrd genes and operons by binding to NrdR-boxes. The polypeptide is Transcriptional repressor NrdR (Acidovorax sp. (strain JS42)).